The primary structure comprises 440 residues: GTPase Der (440 aa).

EngA-type G domains follow at residues 3–167 and 176–351; these read PIIA…PYDR and TRIA…EQYC. GTP-binding positions include 9–16, 56–60, 119–122, 182–189, 229–233, and 294–297; these read GRPNVGKS, DTGGF, NKVD, DTAGI, and NKWD. The KH-like domain maps to 352 to 436; that stretch reads KRVTTGELNR…PLKLIFRGRD (85 aa).

Belongs to the TRAFAC class TrmE-Era-EngA-EngB-Septin-like GTPase superfamily. EngA (Der) GTPase family. In terms of assembly, associates with the 50S ribosomal subunit.

Its function is as follows. GTPase that plays an essential role in the late steps of ribosome biogenesis. The sequence is that of GTPase Der from Geobacter sp. (strain M21).